Reading from the N-terminus, the 1527-residue chain is Lysophospholipase nte1 (1527 aa).

Over 1–69 (MADDGGPFPL…PPPAPSTMVG (69 aa)) the chain is Cytoplasmic. Residues 70 to 90 (WIGWVFSFVFQVIPSILYWAI) form a helical membrane-spanning segment. Residues 91-112 (TFCTITLPTWLFTLFSMSLTFT) are Lumenal-facing. A helical membrane pass occupies residues 113–133 (MNFTTLLLIALAIVSTVSWFI). The Cytoplasmic portion of the chain corresponds to 134-1527 (RYRFLNMYSR…RTLAPRRASI (1394 aa)). Disordered stretches follow at residues 240–259 (ADHELNLAGDDSTDEEGQNV), 299–387 (LSSS…HPDI), 576–596 (EKEQSPFRPPTMRGPASPFHR), and 750–785 (AHGEEAFPTLKRTTTASSRTSSVAPGGSDSKRRRQS). A compositionally biased stretch (basic and acidic residues) spans 355–373 (HLEESRGTPDHDHQPESRT). A nucleoside 3',5'-cyclic phosphate contacts are provided by residues 685–804 (GGTS…VGSV) and 846–966 (RLTS…IAQR). The segment covering 761 to 771 (RTTTASSRTSS) has biased composition (low complexity). Residues 1224 to 1388 (LVLGGGGARG…IDNLTVPHMK (165 aa)) form the PNPLA domain. The GXGXXG signature appears at 1228-1233 (GGGARG). The GXSXG motif lies at 1255 to 1259 (GTSIG). Catalysis depends on Ser1257, which acts as the Nucleophile. The active-site Proton acceptor is the Asp1375. The short motif at 1375–1377 (DGG) is the DGA/G element.

The protein belongs to the NTE family.

The protein localises to the endoplasmic reticulum membrane. It carries out the reaction a 1-acyl-sn-glycero-3-phosphocholine + H2O = sn-glycerol 3-phosphocholine + a fatty acid + H(+). Its activity is regulated as follows. Inhibited by organophosphorus esters. Its function is as follows. Intracellular phospholipase B that catalyzes the double deacylation of phosphatidylcholine (PC) to glycerophosphocholine (GroPCho). Plays an important role in membrane lipid homeostasis. Responsible for the rapid PC turnover in response to inositol, elevated temperatures, or when choline is present in the growth medium. This Aspergillus terreus (strain NIH 2624 / FGSC A1156) protein is Lysophospholipase nte1 (nte1).